The sequence spans 596 residues: Elongation factor 4 (596 aa).

The tr-type G domain occupies 2–184 (RNIRNFSIIA…AIVHRIPPPT (183 aa)). Residues 14–19 (DHGKST) and 131–134 (NKID) each bind GTP.

It belongs to the TRAFAC class translation factor GTPase superfamily. Classic translation factor GTPase family. LepA subfamily.

The protein resides in the cell inner membrane. It carries out the reaction GTP + H2O = GDP + phosphate + H(+). Functionally, required for accurate and efficient protein synthesis under certain stress conditions. May act as a fidelity factor of the translation reaction, by catalyzing a one-codon backward translocation of tRNAs on improperly translocated ribosomes. Back-translocation proceeds from a post-translocation (POST) complex to a pre-translocation (PRE) complex, thus giving elongation factor G a second chance to translocate the tRNAs correctly. Binds to ribosomes in a GTP-dependent manner. The polypeptide is Elongation factor 4 (Xanthomonas oryzae pv. oryzae (strain PXO99A)).